The following is a 979-amino-acid chain: MMDGESPLRHPRISHVSNSGSDFGSSSDYNKYLVQIPPTPDNNPGPASLSIVLLEIDSNQESVPSVSGDIVSGSSGKDNEPDLTDVRINVGEEEEDDTLLSKISYSLTRVVKISPIIIALYRILIVVRVVSLALFLFWRIRNPNNKALWLWLLSVICELWFAFSWLLDQIPKLFPVNHATDIEALKATFETPNPDNPTGKSDLPGIDVFVSTADAEKEPPLVTANTILSILSVDYPVEKLSVYISDDGGSLVTFEAIAEAASFAKIWVPFCRKHKIEPRNPESYFGLKRDPYKDKVRHDFVRERRYVKRAYDEFKVRVNALPHSIRRRSDAFNSKEEIKALEKWKHWKVKVEEDQIKEPRPALVAPKATWMSDGTHWPGTWAVSGPHHSRGDHASVIQVLLDPPGDEPVEGKGGEGRALDLEGVDIRLPMLVYVSREKRPGYDHNKKAGAMNALVRASAIMSNGPFILNLDCDHYVYNSRAFRDGICFMMDHDGDRVSYVQFPQRFEGIDPSDRYANKNTVFFDINLRALDGIQGPMYVGTGCLFRRTALYGFNPPDVFVVEEEPSGSYCFPLIKKRSPATVASEPEYYTDEEDRFDIGLIRKQFGSSSMLVNSVKVAEFEGRPLATVHSSRLGRPPGSLTGSRKPLDFATVNEAVNVISCWYEDKTEWGFNVGWIYGSVTEDVVTGFRMHEKGWRSFYCVTEPDAFRGSAPINLTDRLHQVLRWATGSVEIFFSRNNAIFAGPKLKLLQRIAYLNVGIYPFTSIFILTYCFLPPLSLFSGHFVVETLTGSFLIYLLIITLSLCGLAVLEVKWSGISLEEWWRNEQFWLIGGTSAHLVAVLQGILKVIAGVEISFTLTSKSSTGGDDEDDEFADLYLFKWTALMIPPLTIIILNIVAILFAVCRTVFSANPQWSNLLGGTFFASWVLLHMYPFAKGLMGRGGKTPTVVYVWSGLIAICLSLLYITIKNSEIDGGSFMLV.

Residues M1–G24 are disordered. Residues S14–G24 are compositionally biased toward low complexity. 2 helical membrane-spanning segments follow: residues I116–L136 and A147–L167. Catalysis depends on residues D247 and D683. 6 consecutive transmembrane segments (helical) span residues I765 to V785, L788 to V808, L837 to L857, A882 to V902, W913 to F933, and T946 to I966.

This sequence belongs to the glycosyltransferase 2 family. Plant cellulose synthase-like D subfamily.

The protein localises to the golgi apparatus membrane. Thought to be a Golgi-localized beta-glycan synthase that polymerize the backbones of noncellulosic polysaccharides (hemicelluloses) of plant cell wall. The protein is Putative cellulose synthase-like protein D6 (CSLD6) of Arabidopsis thaliana (Mouse-ear cress).